Here is a 199-residue protein sequence, read N- to C-terminus: Recombination protein RecR (199 aa).

A C4-type zinc finger spans residues 57–72 (CRSCRTFTEESHCPIC). The Toprim domain occupies 81–176 (EQICVVETPA…SVSRIAHGVP (96 aa)).

This sequence belongs to the RecR family.

May play a role in DNA repair. It seems to be involved in an RecBC-independent recombinational process of DNA repair. It may act with RecF and RecO. This Shewanella sediminis (strain HAW-EB3) protein is Recombination protein RecR.